Here is a 218-residue protein sequence, read N- to C-terminus: N-(5'-phosphoribosyl)anthranilate isomerase (218 aa).

This sequence belongs to the TrpF family.

The catalysed reaction is N-(5-phospho-beta-D-ribosyl)anthranilate = 1-(2-carboxyphenylamino)-1-deoxy-D-ribulose 5-phosphate. It functions in the pathway amino-acid biosynthesis; L-tryptophan biosynthesis; L-tryptophan from chorismate: step 3/5. This Halobacterium salinarum (strain ATCC 29341 / DSM 671 / R1) protein is N-(5'-phosphoribosyl)anthranilate isomerase.